A 314-amino-acid polypeptide reads, in one-letter code: HTH-type transcriptional regulator LeuO (314 aa).

In terms of domain architecture, HTH lysR-type spans Val-22 to Thr-79. A DNA-binding region (H-T-H motif) is located at residues Ile-39–Ala-58.

The protein belongs to the LysR transcriptional regulatory family.

Its function is as follows. A global transcription factor. Activates transcription of the 9 following operons; yjjQ-bglJ, yjjP, acrEF, ybdO, yjcRQP, casABCDE12, rhsD-ybbC, fepE and gltF, in most cases it probably interferes with silencing by H-NS and activates transcription. Represses transcription of the 3 following operons; uxaCA, sdaCB and btsT. H-NS repression of the bgl operon, leading to the ability to metabolize some beta-glucosides. It also directly activates the bgl operon. Activation is H-NS and BglJ-RcsB independent. The polypeptide is HTH-type transcriptional regulator LeuO (leuO) (Escherichia coli (strain K12)).